Consider the following 161-residue polypeptide: Small ribosomal subunit protein uS8m (161 aa).

The protein belongs to the universal ribosomal protein uS8 family. In terms of assembly, component of the mitochondrial small ribosomal subunit (mt-SSU). Mature N.crassa 74S mitochondrial ribosomes consist of a small (37S) and a large (54S) subunit. The 37S small subunit contains a 16S ribosomal RNA (16S mt-rRNA) and 32 different proteins. The 54S large subunit contains a 23S rRNA (23S mt-rRNA) and 42 different proteins.

The protein localises to the mitochondrion. In terms of biological role, component of the mitochondrial ribosome (mitoribosome), a dedicated translation machinery responsible for the synthesis of mitochondrial genome-encoded proteins, including at least some of the essential transmembrane subunits of the mitochondrial respiratory chain. The mitoribosomes are attached to the mitochondrial inner membrane and translation products are cotranslationally integrated into the membrane. This is Small ribosomal subunit protein uS8m (mrps8) from Neurospora crassa (strain ATCC 24698 / 74-OR23-1A / CBS 708.71 / DSM 1257 / FGSC 987).